Here is a 187-residue protein sequence, read N- to C-terminus: Elongation factor P (187 aa).

Belongs to the elongation factor P family.

The protein resides in the cytoplasm. It functions in the pathway protein biosynthesis; polypeptide chain elongation. Functionally, involved in peptide bond synthesis. Stimulates efficient translation and peptide-bond synthesis on native or reconstituted 70S ribosomes in vitro. Probably functions indirectly by altering the affinity of the ribosome for aminoacyl-tRNA, thus increasing their reactivity as acceptors for peptidyl transferase. The protein is Elongation factor P of Ruegeria sp. (strain TM1040) (Silicibacter sp.).